The primary structure comprises 1701 residues: Coiled-coil domain-containing protein 180 (1701 aa).

Residues 1 to 35 (MRGGENRPPARVQSSSEELELRHQSLDAFPGRRLP) form a disordered region. Residues 171-198 (QRQAEHKRKSYESALASFQEEIAQVGKE) are a coiled coil. Disordered stretches follow at residues 657 to 808 (EKPS…DKEE), 1272 to 1291 (HHCD…CGSR), and 1319 to 1354 (GFKR…KPNK). Residues 661 to 671 (QKRVKKLRKKQ) are compositionally biased toward basic residues. Residues 672–682 (GSKEDMTRSEE) show a composition bias toward basic and acidic residues. Polar residues predominate over residues 683–692 (SISSGTSTAR). Over residues 696-705 (EVEEENDQEM) the composition is skewed to acidic residues. Positions 755–766 (ENVKGQGEKKEE) are enriched in basic and acidic residues. A coiled-coil region spans residues 757 to 804 (VKGQGEKKEESEEEDEKEEEEEEEKLEEEKEEKEAQEEQESLSVGEEE). Residues 767 to 808 (SEEEDEKEEEEEEEKLEEEKEEKEAQEEQESLSVGEEEDKEE) are compositionally biased toward acidic residues.

The chain is Coiled-coil domain-containing protein 180 (CCDC180) from Homo sapiens (Human).